The following is a 174-amino-acid chain: Ribosome maturation factor RimM (174 aa).

The PRC barrel domain occupies 95–174 (DDEFYWRDLI…QIQVEWPSDF (80 aa)).

The protein belongs to the RimM family. Binds ribosomal protein uS19.

Its subcellular location is the cytoplasm. An accessory protein needed during the final step in the assembly of 30S ribosomal subunit, possibly for assembly of the head region. Essential for efficient processing of 16S rRNA. May be needed both before and after RbfA during the maturation of 16S rRNA. It has affinity for free ribosomal 30S subunits but not for 70S ribosomes. This Idiomarina loihiensis (strain ATCC BAA-735 / DSM 15497 / L2-TR) protein is Ribosome maturation factor RimM.